The primary structure comprises 79 residues: Major outer membrane lipoprotein Lpp 3 (79 aa).

The signal sequence occupies residues 1 to 21 (MNRTNKLILGAVVLGSALLAG). Residue Cys22 is the site of N-palmitoyl cysteine attachment. Cys22 is lipidated: S-diacylglycerol cysteine. 2 consecutive repeats follow at residues 25–35 (NAKIDQLSSDV) and 39–49 (SAKVDQLSNDV). Positions 28–76 (IDQLSSDVQTLSAKVDQLSNDVNAMRSDVQAAKDDAARANQRLDNKVLR) form a coiled coil. Residue Lys79 is modified to N6-murein peptidoglycan lysine.

This sequence belongs to the Lpp family. As to quaternary structure, homotrimer.

It localises to the cell outer membrane. Its subcellular location is the secreted. The protein resides in the cell wall. A highly abundant outer membrane lipoprotein that controls the distance between the inner and outer membranes. The only protein known to be covalently linked to the peptidoglycan network (PGN). Also non-covalently binds the PGN. The link between the cell outer membrane and PGN contributes to maintenance of the structural and functional integrity of the cell envelope, and maintains the correct distance between the PGN and the outer membrane. The polypeptide is Major outer membrane lipoprotein Lpp 3 (Salmonella paratyphi A (strain ATCC 9150 / SARB42)).